Here is a 596-residue protein sequence, read N- to C-terminus: MDVRRRPVKPLYTSKDASAGEPLKQQEVSSPKASDALPLPLYLTNGLFFTMFFSVMYFLLVRWREKIRNSIPLHVVTLSELLAMVSLIASVIYLLGFFGIGFVQSFVSRSNSDSWDIEDENAEQLIIEEDSRRGPCAAATTLGCVVPPPPVRKIAPMVPQQPAKVALSQTEKPSPIIMPALSEDDEEIIQSVVQGKTPSYSLESKLGDCMRAASIRKEALQRITGKSLEGLPLEGFDYSSILGQCCEMPVGYVQIPVGIAGPLLLDGREYSVPMATTEGCLVASTNRGCKAIFVSGGADSVLLRDGMTRAPVVRFTTAKRAAELKFFVEDPLNFETLSLMFNKSSRFARLQGIQCAIAGKNLYITFSCSTGDAMGMNMVSKGVQNVLDYLQSEYPDMDVIGISGNFCSDKKPAAVNWIEGRGKSVVCEAIIKEEVVKKVLKTEVAALVELNMLKNLTGSAMAGALGGFNAHASNIVSAVYLATGQDPAQNVESSHCITMMEAVNDGKDLHVSVTMPSIEVGTVGGGTQLASQSACLNLLGVKGANRDAPGSNARLLATIVAGSVLAGELSLMSAISAGQLVKSHMKYNRSIKDISK.

The segment at M1–S29 is disordered. 2 helical membrane-spanning segments follow: residues L41 to V61 and A83 to V103. The interval Q104–E183 is linker. The tract at residues D184–K596 is catalytic. E278 serves as the catalytic Charge relay system. An N-linked (GlcNAc...) asparagine glycan is attached at N342. Catalysis depends on K410, which acts as the Charge relay system. N455 carries an N-linked (GlcNAc...) asparagine glycan. D486 (charge relay system) is an active-site residue. H584 functions as the Proton donor in the catalytic mechanism. Residue N588 is glycosylated (N-linked (GlcNAc...) asparagine).

The protein belongs to the HMG-CoA reductase family. Expressed in flower primordia and anthers.

The protein localises to the endoplasmic reticulum membrane. It catalyses the reaction (R)-mevalonate + 2 NADP(+) + CoA = (3S)-3-hydroxy-3-methylglutaryl-CoA + 2 NADPH + 2 H(+). It participates in metabolic intermediate biosynthesis; (R)-mevalonate biosynthesis; (R)-mevalonate from acetyl-CoA: step 3/3. Catalyzes the synthesis of mevalonate. The specific precursor of all isoprenoid compounds present in plants. The sequence is that of 3-hydroxy-3-methylglutaryl-coenzyme A reductase 1 (HMG1) from Solanum tuberosum (Potato).